The chain runs to 367 residues: 2-aminoethylphosphonate--pyruvate transaminase (367 aa).

K194 bears the N6-(pyridoxal phosphate)lysine mark.

The protein belongs to the class-V pyridoxal-phosphate-dependent aminotransferase family. PhnW subfamily. In terms of assembly, homodimer. It depends on pyridoxal 5'-phosphate as a cofactor.

The catalysed reaction is (2-aminoethyl)phosphonate + pyruvate = phosphonoacetaldehyde + L-alanine. In terms of biological role, involved in phosphonate degradation. The protein is 2-aminoethylphosphonate--pyruvate transaminase of Salmonella paratyphi B (strain ATCC BAA-1250 / SPB7).